The sequence spans 72 residues: Translation initiation factor IF-1 (72 aa).

Positions 1–72 constitute an S1-like domain; the sequence is MSKEGKITLK…TRGRIIYRIS (72 aa).

This sequence belongs to the IF-1 family. As to quaternary structure, component of the 30S ribosomal translation pre-initiation complex which assembles on the 30S ribosome in the order IF-2 and IF-3, IF-1 and N-formylmethionyl-tRNA(fMet); mRNA recruitment can occur at any time during PIC assembly.

It localises to the cytoplasm. Its function is as follows. One of the essential components for the initiation of protein synthesis. Stabilizes the binding of IF-2 and IF-3 on the 30S subunit to which N-formylmethionyl-tRNA(fMet) subsequently binds. Helps modulate mRNA selection, yielding the 30S pre-initiation complex (PIC). Upon addition of the 50S ribosomal subunit IF-1, IF-2 and IF-3 are released leaving the mature 70S translation initiation complex. The protein is Translation initiation factor IF-1 of Malacoplasma penetrans (strain HF-2) (Mycoplasma penetrans).